Consider the following 127-residue polypeptide: MDLIAQIEAEQIAALGKDIPDFRAGDTVRVGFKVTEGTRTRVQNYEGVCIARNNGHGIAGSFTVRKISFGEGVERVFPLHSTNIESITVVRRGRVRRAKLYYLRSRRGKSARIAENTNYKPKSGASV.

This sequence belongs to the bacterial ribosomal protein bL19 family.

This protein is located at the 30S-50S ribosomal subunit interface and may play a role in the structure and function of the aminoacyl-tRNA binding site. In Roseobacter denitrificans (strain ATCC 33942 / OCh 114) (Erythrobacter sp. (strain OCh 114)), this protein is Large ribosomal subunit protein bL19.